Here is a 211-residue protein sequence, read N- to C-terminus: Large ribosomal subunit protein eL13 (211 aa).

This sequence belongs to the eukaryotic ribosomal protein eL13 family. As to quaternary structure, component of the 60S large ribosomal subunit (LSU).

It is found in the cytoplasm. In terms of biological role, component of the ribosome, a large ribonucleoprotein complex responsible for the synthesis of proteins in the cell. The small ribosomal subunit (SSU) binds messenger RNAs (mRNAs) and translates the encoded message by selecting cognate aminoacyl-transfer RNA (tRNA) molecules. The large subunit (LSU) contains the ribosomal catalytic site termed the peptidyl transferase center (PTC), which catalyzes the formation of peptide bonds, thereby polymerizing the amino acids delivered by tRNAs into a polypeptide chain. The nascent polypeptides leave the ribosome through a tunnel in the LSU and interact with protein factors that function in enzymatic processing, targeting, and the membrane insertion of nascent chains at the exit of the ribosomal tunnel. As part of the LSU, it is probably required for its formation and the maturation of rRNAs. This Danio rerio (Zebrafish) protein is Large ribosomal subunit protein eL13 (rpl13).